The following is a 249-amino-acid chain: Phosphate import ATP-binding protein PstB (249 aa).

Residues 4–244 enclose the ABC transporter domain; sequence VKIKDLSLFY…PQDKRTEDYI (241 aa). 36–43 is a binding site for ATP; it reads GPSGCGKS.

This sequence belongs to the ABC transporter superfamily. Phosphate importer (TC 3.A.1.7) family. As to quaternary structure, the complex is composed of two ATP-binding proteins (PstB), two transmembrane proteins (PstC and PstA) and a solute-binding protein (PstS).

It is found in the cell membrane. It catalyses the reaction phosphate(out) + ATP + H2O = ADP + 2 phosphate(in) + H(+). Its function is as follows. Part of the ABC transporter complex PstSACB involved in phosphate import. Responsible for energy coupling to the transport system. This chain is Phosphate import ATP-binding protein PstB, found in Clostridium tetani (strain Massachusetts / E88).